The following is a 588-amino-acid chain: Probable basic-leucine zipper transcription factor M (588 aa).

Residues 127–157 (QVEQQQEQEQEQEQQQKQQQQQYIEKQIQEI) are a coiled coil. Low complexity predominate over residues 221–240 (QQNHIDNQSLNNSNTKTSKN). The disordered stretch occupies residues 221 to 250 (QQNHIDNQSLNNSNTKTSKNQQKDNNLPKK). Residues 263 to 326 (NNNNIEKKRD…GSNLMRPEPE (64 aa)) enclose the bZIP domain. A basic motif region spans residues 269–289 (KKRDQTESSKNFREKKKEYVK). The leucine-zipper stretch occupies residues 291–312 (IESKILALTLENDKLKKENDSL).

Belongs to the bZIP family.

The protein resides in the nucleus. Its function is as follows. Probable transcriptional regulator. The polypeptide is Probable basic-leucine zipper transcription factor M (bzpM) (Dictyostelium discoideum (Social amoeba)).